Consider the following 258-residue polypeptide: Peptide methionine sulfoxide reductase A4, chloroplastic (258 aa).

The transit peptide at 1–53 (MQVLVVSPPLIAAASLSKPLNSLSKAALSFSRAKPICPFPQTSRRPISVYKSP) directs the protein to the chloroplast. Met-54 bears the N-acetylmethionine mark. Residues 62–89 (GFGSRPQAQADPSSAAIAQGPDDDVPSS) are disordered. A Phosphoserine modification is found at Ser-245.

This sequence belongs to the MsrA Met sulfoxide reductase family. In terms of tissue distribution, expressed in rosette and cauline leaves, and at lower levels in stems and flowers (at protein level).

It is found in the plastid. The protein localises to the chloroplast stroma. It carries out the reaction L-methionyl-[protein] + [thioredoxin]-disulfide + H2O = L-methionyl-(S)-S-oxide-[protein] + [thioredoxin]-dithiol. The enzyme catalyses [thioredoxin]-disulfide + L-methionine + H2O = L-methionine (S)-S-oxide + [thioredoxin]-dithiol. In terms of biological role, catalyzes the reduction of methionine sulfoxide (MetSO) to methionine in proteins. Plays a protective role against oxidative stress by restoring activity to proteins that have been inactivated by methionine oxidation. Prevents the methionine sulfoxidation of the heat shock protein HSP21 and its subsequent inactivation. MSRA family specifically reduces the MetSO S-enantiomer. The protein is Peptide methionine sulfoxide reductase A4, chloroplastic (MSR4) of Arabidopsis thaliana (Mouse-ear cress).